The sequence spans 422 residues: MLDLEVVPERSLGNEQWEFTLGMPLAQAVAILQKHCRIIRNVQVLYSEQSPLSHDLILNLTQDGITLLFDAFNQRLKVIEVCELTKVKLKYCGVHFNSQAIAPTIEQIDQSFGATHPGVYNSTEQLFHLNFRGLSFSFQLDSWTEAPKYEPNFAHGLASLQIPHGATVKRMYIYSGNSLQDTKAPVMPLSCFLGNVYAESVDVLRDGTGPSGLRLRLLAAGCGPGVLADAKMRVFERAVYFGDSCQDVLSMLGSPHKVFYKSEDKMKIHSPSPHKQVPSKCNDYFFNYFTLGVDILFDANTHKVKKFVLHTNYPGHYNFNIYHRCEFKIPLAIKKENAGGQTEICTTYSKWDSIQELLGHPVEKPVVLHRSSSPNNTNPFGSTFCFGLQRMIFEVMQNNHIASVTLYGPPRPGAHLRTAELP.

This sequence belongs to the PHAF1 family. As to quaternary structure, interacts with BCAS3; the interaction is requrired for the association with the phagophore.

It localises to the cytoplasm. The protein resides in the preautophagosomal structure. In terms of biological role, plays a regulatory role in autophagic activity. In complex with BCAS3, associates with the autophagosome formation site during both non-selective and selective autophagy. The polypeptide is Phagosome assembly factor 1 (Mus musculus (Mouse)).